Here is a 121-residue protein sequence, read N- to C-terminus: Large ribosomal subunit protein uL14 (121 aa).

Belongs to the universal ribosomal protein uL14 family. Part of the 50S ribosomal subunit. Forms a cluster with proteins L3 and L19. In the 70S ribosome, L14 and L19 interact and together make contacts with the 16S rRNA in bridges B5 and B8.

Its function is as follows. Binds to 23S rRNA. Forms part of two intersubunit bridges in the 70S ribosome. This chain is Large ribosomal subunit protein uL14, found in Legionella pneumophila (strain Corby).